Reading from the N-terminus, the 575-residue chain is Isocitrate dehydrogenase kinase/phosphatase (575 aa).

Residues 315–321 and Lys336 contribute to the ATP site; that span reads APGIRGM. Asp371 is an active-site residue.

It belongs to the AceK family.

Its subcellular location is the cytoplasm. The catalysed reaction is L-seryl-[isocitrate dehydrogenase] + ATP = O-phospho-L-seryl-[isocitrate dehydrogenase] + ADP + H(+). Functionally, bifunctional enzyme which can phosphorylate or dephosphorylate isocitrate dehydrogenase (IDH) on a specific serine residue. This is a regulatory mechanism which enables bacteria to bypass the Krebs cycle via the glyoxylate shunt in response to the source of carbon. When bacteria are grown on glucose, IDH is fully active and unphosphorylated, but when grown on acetate or ethanol, the activity of IDH declines drastically concomitant with its phosphorylation. In Citrobacter koseri (strain ATCC BAA-895 / CDC 4225-83 / SGSC4696), this protein is Isocitrate dehydrogenase kinase/phosphatase.